Reading from the N-terminus, the 110-residue chain is Large ribosomal subunit protein uL22 (110 aa).

This sequence belongs to the universal ribosomal protein uL22 family. Part of the 50S ribosomal subunit.

In terms of biological role, this protein binds specifically to 23S rRNA; its binding is stimulated by other ribosomal proteins, e.g. L4, L17, and L20. It is important during the early stages of 50S assembly. It makes multiple contacts with different domains of the 23S rRNA in the assembled 50S subunit and ribosome. Its function is as follows. The globular domain of the protein is located near the polypeptide exit tunnel on the outside of the subunit, while an extended beta-hairpin is found that lines the wall of the exit tunnel in the center of the 70S ribosome. This is Large ribosomal subunit protein uL22 from Citrobacter koseri (strain ATCC BAA-895 / CDC 4225-83 / SGSC4696).